A 344-amino-acid polypeptide reads, in one-letter code: Anthranilate phosphoribosyltransferase (344 aa).

5-phospho-alpha-D-ribose 1-diphosphate is bound by residues glycine 84, 87 to 88 (GD), threonine 92, 94 to 97 (NIST), 112 to 120 (KHGGRSVSS), and serine 124. An anthranilate-binding site is contributed by glycine 84. Serine 96 contacts Mg(2+). An anthranilate-binding site is contributed by arginine 170. Mg(2+) contacts are provided by aspartate 229 and glutamate 230.

It belongs to the anthranilate phosphoribosyltransferase family. As to quaternary structure, homodimer. Requires Mg(2+) as cofactor.

It catalyses the reaction N-(5-phospho-beta-D-ribosyl)anthranilate + diphosphate = 5-phospho-alpha-D-ribose 1-diphosphate + anthranilate. The protein operates within amino-acid biosynthesis; L-tryptophan biosynthesis; L-tryptophan from chorismate: step 2/5. Its function is as follows. Catalyzes the transfer of the phosphoribosyl group of 5-phosphorylribose-1-pyrophosphate (PRPP) to anthranilate to yield N-(5'-phosphoribosyl)-anthranilate (PRA). This chain is Anthranilate phosphoribosyltransferase, found in Janthinobacterium sp. (strain Marseille) (Minibacterium massiliensis).